Reading from the N-terminus, the 355-residue chain is NADH dehydrogenase [ubiquinone] 1 alpha subcomplex subunit 10, mitochondrial (355 aa).

The N-terminal 35 residues, 1 to 35, are a transit peptide targeting the mitochondrion; the sequence is MALRLLRLVPASAPARGLAAGAQRVGRIHTSVHCK. At lysine 122 the chain carries N6-acetyllysine; alternate. Lysine 122 is subject to N6-succinyllysine; alternate. Position 250 is a phosphoserine; by PINK1 (serine 250). The residue at position 285 (lysine 285) is an N6-succinyllysine.

The protein belongs to the complex I NDUFA10 subunit family. In terms of assembly, complex I is composed of 45 different subunits. This a component of the hydrophobic protein fraction. FAD is required as a cofactor. Phosphorylation at Ser-250 by PINK1 is required for the binding and/or reduction of the complex I substrate ubiquinone. Post-translationally, acetylation of Lys-242 is observed in liver mitochondria from fasted mice but not from fed mice.

The protein resides in the mitochondrion matrix. Functionally, accessory subunit of the mitochondrial membrane respiratory chain NADH dehydrogenase (Complex I), that is believed not to be involved in catalysis. Complex I functions in the transfer of electrons from NADH to the respiratory chain. The immediate electron acceptor for the enzyme is believed to be ubiquinone. This Mus musculus (Mouse) protein is NADH dehydrogenase [ubiquinone] 1 alpha subcomplex subunit 10, mitochondrial (Ndufa10).